We begin with the raw amino-acid sequence, 316 residues long: Universal stress protein E (316 aa).

The protein belongs to the universal stress protein A family.

It localises to the cytoplasm. Its function is as follows. Required for resistance to DNA-damaging agents. This is Universal stress protein E (uspE) from Escherichia coli O157:H7.